The primary structure comprises 169 residues: Cell division inhibitor SulA (169 aa).

Over residues 1-16 the composition is skewed to polar residues; that stretch reads MFTSAHANRSPLTSAS. The segment at 1–20 is disordered; sequence MFTSAHANRSPLTSASVRRP. The tract at residues 106–112 is ftsZ binding; it reads ALRTGNY. Residues 162–169 are lon protease binding; that stretch reads KIHSNLYH.

Belongs to the SulA family. In terms of assembly, interacts with FtsZ. Post-translationally, is rapidly cleaved and degraded by the Lon protease once DNA damage is repaired.

Its function is as follows. Component of the SOS system and an inhibitor of cell division. Accumulation of SulA causes rapid cessation of cell division and the appearance of long, non-septate filaments. In the presence of GTP, binds a polymerization-competent form of FtsZ in a 1:1 ratio, thus inhibiting FtsZ polymerization and therefore preventing it from participating in the assembly of the Z ring. This mechanism prevents the premature segregation of damaged DNA to daughter cells during cell division. The chain is Cell division inhibitor SulA from Klebsiella aerogenes (Enterobacter aerogenes).